The chain runs to 378 residues: Probable 3-hydroxyisobutyryl-CoA hydrolase 3 (378 aa).

2 residues coordinate substrate: Glu138 and Asp146.

Belongs to the enoyl-CoA hydratase/isomerase family.

It localises to the peroxisome. The catalysed reaction is 3-hydroxy-2-methylpropanoyl-CoA + H2O = 3-hydroxy-2-methylpropanoate + CoA + H(+). It participates in amino-acid degradation; L-valine degradation. Involved in valine catabolism. The sequence is that of Probable 3-hydroxyisobutyryl-CoA hydrolase 3 from Arabidopsis thaliana (Mouse-ear cress).